The primary structure comprises 239 residues: Large ribosomal subunit protein uL30 (239 aa).

The disordered stretch occupies residues 1–37 (MSKFVPENVQKKLARDEKLRKAKAEQRKASSAQMKQR). The span at 9 to 28 (VQKKLARDEKLRKAKAEQRK) shows a compositional bias: basic and acidic residues.

It belongs to the universal ribosomal protein uL30 family.

The sequence is that of Large ribosomal subunit protein uL30 (RPL7) from Tetrahymena thermophila.